The sequence spans 163 residues: Neurotrophin-3 (163 aa).

A signal peptide spans Ile-1–Ser-3. Residues Thr-4–Arg-119 constitute a propeptide that is removed on maturation. N-linked (GlcNAc...) asparagine glycosylation occurs at Asn-112.

The protein belongs to the NGF-beta family.

The protein localises to the secreted. Its function is as follows. Seems to promote the survival of visceral and proprioceptive sensory neurons. The protein is Neurotrophin-3 (NTF3) of Chilabothrus striatus (Haitian boa constrictor).